The primary structure comprises 883 residues: Phosphoenolpyruvate carboxylase (883 aa).

Catalysis depends on residues His138 and Lys546.

Belongs to the PEPCase type 1 family. In terms of assembly, homotetramer. It depends on Mg(2+) as a cofactor.

The enzyme catalyses oxaloacetate + phosphate = phosphoenolpyruvate + hydrogencarbonate. The enzyme has distinct binding sites for each of the allosteric effectors such as acetyl-CoA, fructose 1,6-bisphosphate, guanosine 3'-diphosphate 5'-diphosphate, long chain fatty acids, and L-aspartate. In terms of biological role, forms oxaloacetate, a four-carbon dicarboxylic acid source for the tricarboxylic acid cycle. This chain is Phosphoenolpyruvate carboxylase, found in Escherichia coli O157:H7.